A 290-amino-acid chain; its full sequence is 2-dehydro-3-deoxy-phosphogluconate/2-dehydro-3-deoxy-6-phosphogalactonate aldolase (290 aa).

Substrate contacts are provided by residues 42–43 (TT), 129–131 (YNY), and 155–157 (KDT). Catalysis depends on Lys155, which acts as the Schiff-base intermediate with substrate.

It belongs to the DapA family. KDPG aldolase subfamily. In terms of assembly, homotetramer; dimer of dimers.

The catalysed reaction is 2-dehydro-3-deoxy-6-phospho-D-gluconate = D-glyceraldehyde 3-phosphate + pyruvate. It carries out the reaction 2-dehydro-3-deoxy-6-phospho-D-galactonate = D-glyceraldehyde 3-phosphate + pyruvate. It functions in the pathway carbohydrate acid metabolism; 2-dehydro-3-deoxy-D-gluconate degradation; D-glyceraldehyde 3-phosphate and pyruvate from 2-dehydro-3-deoxy-D-gluconate: step 2/2. Its function is as follows. Involved in the degradation of glucose and galactose via the Entner-Doudoroff pathway. Catalyzes the reversible cleavage of 2-keto-3-deoxy-6-phosphogluconate (KDPG) and 2-keto-3-deoxygluconate (KDG) forming pyruvate and glyceraldehyde 3-phosphate or glyceraldehyde, respectively. It is also able to catalyze the reversible cleavage of 2-keto-3-deoxy-6-phosphogalactonate (KDPGal) and 2-keto-3-deoxygalactonate (KDGal). This is 2-dehydro-3-deoxy-phosphogluconate/2-dehydro-3-deoxy-6-phosphogalactonate aldolase (kdgA) from Sulfurisphaera tokodaii (strain DSM 16993 / JCM 10545 / NBRC 100140 / 7) (Sulfolobus tokodaii).